Reading from the N-terminus, the 250-residue chain is Phosphate import ATP-binding protein PstB (250 aa).

One can recognise an ABC transporter domain in the interval 4 to 245 (LTARDLKLSF…PRHELTEKYV (242 aa)). ATP is bound at residue 36–43 (GPSGSGKS).

It belongs to the ABC transporter superfamily. Phosphate importer (TC 3.A.1.7) family. As to quaternary structure, the complex is composed of two ATP-binding proteins (PstB), two transmembrane proteins (PstC and PstA) and a solute-binding protein (PstS).

The protein resides in the cell membrane. The catalysed reaction is phosphate(out) + ATP + H2O = ADP + 2 phosphate(in) + H(+). In terms of biological role, part of the ABC transporter complex PstSACB involved in phosphate import. Responsible for energy coupling to the transport system. In Pyrobaculum aerophilum (strain ATCC 51768 / DSM 7523 / JCM 9630 / CIP 104966 / NBRC 100827 / IM2), this protein is Phosphate import ATP-binding protein PstB.